Reading from the N-terminus, the 1342-residue chain is DNA-directed RNA polymerase subunit beta (1342 aa).

Belongs to the RNA polymerase beta chain family. The RNAP catalytic core consists of 2 alpha, 1 beta, 1 beta' and 1 omega subunit. When a sigma factor is associated with the core the holoenzyme is formed, which can initiate transcription.

It carries out the reaction RNA(n) + a ribonucleoside 5'-triphosphate = RNA(n+1) + diphosphate. In terms of biological role, DNA-dependent RNA polymerase catalyzes the transcription of DNA into RNA using the four ribonucleoside triphosphates as substrates. The polypeptide is DNA-directed RNA polymerase subunit beta (Pasteurella multocida (strain Pm70)).